Reading from the N-terminus, the 594-residue chain is Lipolysis-stimulated lipoprotein receptor (594 aa).

The first 35 residues, 1–35, serve as a signal peptide directing secretion; the sequence is MAPAASACAGAPGSHPATTIFVCLFLIIYCPDRAS. Residues 36–206 lie on the Extracellular side of the membrane; sequence AIQVTVPDPY…PGFRAGPLED (171 aa). An Ig-like V-type domain is found at 89–181; it reads PASVDNQLNA…DLDGNNEAYA (93 aa). A disulfide bond links Cys-113 and Cys-165. The chain crosses the membrane as a helical span at residues 207–227; it reads WLFVVVVCLASLLFFLLLGIC. Topologically, residues 228–594 are cytoplasmic; it reads WCQCCPHTCC…LALSRESLVV (367 aa). Thr-283 is modified (phosphothreonine). Ser-308 bears the Phosphoserine; by MAPK8 and MAPK9 mark. Ser-314, Ser-332, Ser-375, and Ser-379 each carry phosphoserine. Residues 375–387 show a composition bias toward basic and acidic residues; it reads SEVTSLHEDDWRS. The interval 375–594 is disordered; that stretch reads SEVTSLHEDD…LALSRESLVV (220 aa). Thr-396 carries the phosphothreonine modification. 3 positions are modified to phosphoserine: Ser-407, Ser-410, and Ser-436. The span at 435 to 444 shows a compositional bias: basic and acidic residues; it reads RSVDALDDIN. Over residues 445–460 the composition is skewed to low complexity; sequence RPGSTESGRSSPPSSG. Phosphoserine is present on residues Ser-471 and Ser-473. Positions 472–550 are enriched in basic and acidic residues; it reads RSRDDLYDPD…GAGERRRVYR (79 aa). A Phosphotyrosine modification is found at Tyr-478. Ser-576 carries the post-translational modification Phosphoserine. A Glycyl lysine isopeptide (Lys-Gly) (interchain with G-Cter in ubiquitin) cross-link involves residue Lys-583. Ser-588 and Ser-591 each carry phosphoserine.

This sequence belongs to the immunoglobulin superfamily. LISCH7 family. Homotrimer or homotetramer. Assembles into cell-cell contacts. Interacts (via the cytoplasmic domain) with MARVELD2 (via C-terminal cytoplasmic domain); the interaction is required to recruit MARVELD2 to tricellular contacts. Interacts with OCLN. In terms of processing, phosphorylation at Ser-308 by MAPK8/JNK1 and MAPK9/JNK2 may be required for exclusive localization at tricellular tight junstions. Polyubiquitinated at Lys-583 via 'Lys-63'-linked ubiquitin chains; deubiquitinated by USP53. In terms of tissue distribution, expressed in epithelial tissues (at protein level). Specifically expressed in liver and to a lower extent in kidney (at protein level). Also detected in brain, testis, ovaries, adrenal gland, intestine, muscle, and lung. In colon, only expressed in the lower portion of crypts. Expressed in the liver. Expressed in liver, stomach, small intestine and colon. Also detected in other epithelial tissues.

It is found in the cell membrane. It localises to the cell junction. Its subcellular location is the tight junction. Its function is as follows. Probable role in the clearance of triglyceride-rich lipoprotein from blood. Binds chylomicrons, LDL and VLDL in presence of free fatty acids and allows their subsequent uptake in the cells. Maintains epithelial barrier function by recruiting MARVELD2/tricellulin to tricellular tight junctions. This is Lipolysis-stimulated lipoprotein receptor from Mus musculus (Mouse).